Reading from the N-terminus, the 79-residue chain is Sec-independent protein translocase protein TatA (79 aa).

Residues 1-21 (MHMPSGTQWLIILLIVVLLFG) form a helical membrane-spanning segment.

Belongs to the TatA/E family. The Tat system comprises two distinct complexes: a TatABC complex, containing multiple copies of TatA, TatB and TatC subunits, and a separate TatA complex, containing only TatA subunits. Substrates initially bind to the TatABC complex, which probably triggers association of the separate TatA complex to form the active translocon.

The protein resides in the cell inner membrane. Functionally, part of the twin-arginine translocation (Tat) system that transports large folded proteins containing a characteristic twin-arginine motif in their signal peptide across membranes. TatA could form the protein-conducting channel of the Tat system. This Campylobacter lari (strain RM2100 / D67 / ATCC BAA-1060) protein is Sec-independent protein translocase protein TatA.